A 224-amino-acid polypeptide reads, in one-letter code: Phosphoribosylformylglycinamidine synthase subunit PurQ (224 aa).

The Glutamine amidotransferase type-1 domain maps to 4-224; it reads RIGVITFPGT…YSALDSVLAS (221 aa). The active-site Nucleophile is C87. Active-site residues include H195 and E197.

In terms of assembly, part of the FGAM synthase complex composed of 1 PurL, 1 PurQ and 2 PurS subunits.

The protein localises to the cytoplasm. The enzyme catalyses N(2)-formyl-N(1)-(5-phospho-beta-D-ribosyl)glycinamide + L-glutamine + ATP + H2O = 2-formamido-N(1)-(5-O-phospho-beta-D-ribosyl)acetamidine + L-glutamate + ADP + phosphate + H(+). It carries out the reaction L-glutamine + H2O = L-glutamate + NH4(+). Its pathway is purine metabolism; IMP biosynthesis via de novo pathway; 5-amino-1-(5-phospho-D-ribosyl)imidazole from N(2)-formyl-N(1)-(5-phospho-D-ribosyl)glycinamide: step 1/2. Part of the phosphoribosylformylglycinamidine synthase complex involved in the purines biosynthetic pathway. Catalyzes the ATP-dependent conversion of formylglycinamide ribonucleotide (FGAR) and glutamine to yield formylglycinamidine ribonucleotide (FGAM) and glutamate. The FGAM synthase complex is composed of three subunits. PurQ produces an ammonia molecule by converting glutamine to glutamate. PurL transfers the ammonia molecule to FGAR to form FGAM in an ATP-dependent manner. PurS interacts with PurQ and PurL and is thought to assist in the transfer of the ammonia molecule from PurQ to PurL. The polypeptide is Phosphoribosylformylglycinamidine synthase subunit PurQ (Mycobacterium leprae (strain TN)).